A 342-amino-acid chain; its full sequence is tRNA N6-adenosine threonylcarbamoyltransferase (342 aa).

The Fe cation site is built by histidine 114 and histidine 118. Residues 136-140 (LVSGG), aspartate 169, glycine 182, aspartate 186, and asparagine 275 contribute to the substrate site. Aspartate 301 lines the Fe cation pocket.

Belongs to the KAE1 / TsaD family. Requires Fe(2+) as cofactor.

It localises to the cytoplasm. The enzyme catalyses L-threonylcarbamoyladenylate + adenosine(37) in tRNA = N(6)-L-threonylcarbamoyladenosine(37) in tRNA + AMP + H(+). Functionally, required for the formation of a threonylcarbamoyl group on adenosine at position 37 (t(6)A37) in tRNAs that read codons beginning with adenine. Is involved in the transfer of the threonylcarbamoyl moiety of threonylcarbamoyl-AMP (TC-AMP) to the N6 group of A37, together with TsaE and TsaB. TsaD likely plays a direct catalytic role in this reaction. This is tRNA N6-adenosine threonylcarbamoyltransferase from Streptococcus pyogenes serotype M3 (strain ATCC BAA-595 / MGAS315).